The primary structure comprises 170 residues: Crossover junction endodeoxyribonuclease RuvC (170 aa).

Active-site residues include D9, E70, and D145. Residues D9, E70, and D145 each contribute to the Mg(2+) site.

This sequence belongs to the RuvC family. In terms of assembly, homodimer which binds Holliday junction (HJ) DNA. The HJ becomes 2-fold symmetrical on binding to RuvC with unstacked arms; it has a different conformation from HJ DNA in complex with RuvA. In the full resolvosome a probable DNA-RuvA(4)-RuvB(12)-RuvC(2) complex forms which resolves the HJ. It depends on Mg(2+) as a cofactor.

Its subcellular location is the cytoplasm. The catalysed reaction is Endonucleolytic cleavage at a junction such as a reciprocal single-stranded crossover between two homologous DNA duplexes (Holliday junction).. Its function is as follows. The RuvA-RuvB-RuvC complex processes Holliday junction (HJ) DNA during genetic recombination and DNA repair. Endonuclease that resolves HJ intermediates. Cleaves cruciform DNA by making single-stranded nicks across the HJ at symmetrical positions within the homologous arms, yielding a 5'-phosphate and a 3'-hydroxyl group; requires a central core of homology in the junction. The consensus cleavage sequence is 5'-(A/T)TT(C/G)-3'. Cleavage occurs on the 3'-side of the TT dinucleotide at the point of strand exchange. HJ branch migration catalyzed by RuvA-RuvB allows RuvC to scan DNA until it finds its consensus sequence, where it cleaves and resolves the cruciform DNA. In Chlamydia trachomatis serovar L2 (strain ATCC VR-902B / DSM 19102 / 434/Bu), this protein is Crossover junction endodeoxyribonuclease RuvC.